The following is an 876-amino-acid chain: DNA gyrase subunit A (876 aa).

The Topo IIA-type catalytic domain maps to 34–532; the sequence is LPDVRDGLKP…NSVDINIEDL (499 aa). The O-(5'-phospho-DNA)-tyrosine intermediate role is filled by Tyr122. A GyrA-box motif is present at residues 559–565; that stretch reads QRRGGKG. The tract at residues 844 to 876 is disordered; that stretch reads DEELDAIDGSAAEGDEDIAPEADTDDDIAEDEE. Residues 856-876 show a composition bias toward acidic residues; sequence EGDEDIAPEADTDDDIAEDEE.

This sequence belongs to the type II topoisomerase GyrA/ParC subunit family. As to quaternary structure, heterotetramer, composed of two GyrA and two GyrB chains. In the heterotetramer, GyrA contains the active site tyrosine that forms a transient covalent intermediate with DNA, while GyrB binds cofactors and catalyzes ATP hydrolysis.

The protein localises to the cytoplasm. It catalyses the reaction ATP-dependent breakage, passage and rejoining of double-stranded DNA.. Its function is as follows. A type II topoisomerase that negatively supercoils closed circular double-stranded (ds) DNA in an ATP-dependent manner to modulate DNA topology and maintain chromosomes in an underwound state. Negative supercoiling favors strand separation, and DNA replication, transcription, recombination and repair, all of which involve strand separation. Also able to catalyze the interconversion of other topological isomers of dsDNA rings, including catenanes and knotted rings. Type II topoisomerases break and join 2 DNA strands simultaneously in an ATP-dependent manner. This chain is DNA gyrase subunit A, found in Klebsiella oxytoca.